Reading from the N-terminus, the 37-residue chain is Protein 6.3 (37 aa).

The polypeptide is Protein 6.3 (Escherichia phage T7 (Bacteriophage T7)).